We begin with the raw amino-acid sequence, 727 residues long: Translation initiation factor IF-2, mitochondrial (727 aa).

The N-terminal 29 residues, 1 to 29 (MNQKLLKLENLLRFHTICRQVHSPSQRRL), are a transit peptide targeting the mitochondrion. Residues 178-346 (PRSPVVTVMG…ATIALAEILE (169 aa)) enclose the tr-type G domain. Residues 187–194 (GHVDHGKT) form a G1 region. 187–194 (GHVDHGKT) provides a ligand contact to GTP. The tract at residues 212–216 (GITQH) is G2. Residues 234 to 237 (DTPG) and 288 to 291 (NKCD) each bind GTP. A G3 region spans residues 234-237 (DTPG). The G4 stretch occupies residues 288–291 (NKCD). The tract at residues 324-326 (SAL) is G5. Phosphothreonine is present on threonine 688.

Belongs to the TRAFAC class translation factor GTPase superfamily. Classic translation factor GTPase family. IF-2 subfamily. In terms of assembly, monomer.

The protein resides in the mitochondrion. In terms of biological role, one of the essential components for the initiation of protein synthesis. Protects formylmethionyl-tRNA from spontaneous hydrolysis and promotes its binding to the 30S ribosomal subunits. Also involved in the hydrolysis of GTP during the formation of the 70S ribosomal complex. The protein is Translation initiation factor IF-2, mitochondrial (Mtif2) of Mus musculus (Mouse).